Reading from the N-terminus, the 643-residue chain is Carboxy-terminal kinesin 2 (643 aa).

2 disordered regions span residues M1 to E42 and M81 to V101. Residues M1–K116 form a globular region. Residues P88 to V101 show a composition bias toward polar residues. Residues K117–R296 adopt a coiled-coil conformation. The Kinesin motor domain occupies N294–C633. G386 to T393 is an ATP binding site.

It belongs to the TRAFAC class myosin-kinesin ATPase superfamily. Kinesin family. NCD subfamily.

The protein localises to the cytoplasm. It is found in the cytoskeleton. Functionally, promotes mitotic spindle assembly. The protein is Carboxy-terminal kinesin 2 of Xenopus laevis (African clawed frog).